The primary structure comprises 420 residues: Polyketide biosynthesis 3-hydroxy-3-methylglutaryl-ACP synthase PksG (420 aa).

The Proton donor/acceptor role is filled by Glu82. The active-site Acyl-thioester intermediate is Cys114. His250 serves as the catalytic Proton donor/acceptor.

The protein belongs to the thiolase-like superfamily. HMG-CoA synthase family.

The protein resides in the cytoplasm. The enzyme catalyses 3-oxobutanoyl-[ACP] + acetyl-[ACP] + H2O = (3S)-hydroxy-3-methylglutaryl-[ACP] + holo-[ACP] + H(+). It participates in antibiotic biosynthesis; bacillaene biosynthesis. In terms of biological role, involved in some intermediate steps for the synthesis of the antibiotic polyketide bacillaene which is involved in secondary metabolism. It catalyzes the aldol condensation between the acetyl group attached to the acyl-carrier-protein AcpK (Ac-AcpK) and a beta-ketothioester polyketide intermediate linked to one of the consecutive thiolation domains of PksL. The protein is Polyketide biosynthesis 3-hydroxy-3-methylglutaryl-ACP synthase PksG (pksG) of Bacillus subtilis (strain 168).